We begin with the raw amino-acid sequence, 956 residues long: Zinc protease PQQL-like (956 aa).

Residue M1 is modified to N-acetylmethionine. H85 contacts Zn(2+). The Proton acceptor role is filled by E88. Residue H89 participates in Zn(2+) binding. E165 is a catalytic residue. E172 contacts Zn(2+).

The protein belongs to the peptidase M16 family. Requires Zn(2+) as cofactor.

This chain is Zinc protease PQQL-like, found in Arabidopsis thaliana (Mouse-ear cress).